Here is a 189-residue protein sequence, read N- to C-terminus: Cell division protein SepF (189 aa).

Polar residues predominate over residues 152-163; it reads FQEEPSPSSVMN. The interval 152-189 is disordered; the sequence is FQEEPSPSSVMNKDNEGPVSESVMAPEPAWGASVPSAI.

Belongs to the SepF family. Homodimer. Interacts with FtsZ.

The protein localises to the cytoplasm. Its function is as follows. Cell division protein that is part of the divisome complex and is recruited early to the Z-ring. Probably stimulates Z-ring formation, perhaps through the cross-linking of FtsZ protofilaments. Its function overlaps with FtsA. The protein is Cell division protein SepF of Prochlorococcus marinus (strain SARG / CCMP1375 / SS120).